A 448-amino-acid polypeptide reads, in one-letter code: Glucose-6-phosphate isomerase (448 aa).

Residue glutamate 291 is the Proton donor of the active site. Residues histidine 312 and lysine 425 contribute to the active site.

The protein belongs to the GPI family.

Its subcellular location is the cytoplasm. It catalyses the reaction alpha-D-glucose 6-phosphate = beta-D-fructose 6-phosphate. The protein operates within carbohydrate biosynthesis; gluconeogenesis. It functions in the pathway carbohydrate degradation; glycolysis; D-glyceraldehyde 3-phosphate and glycerone phosphate from D-glucose: step 2/4. Catalyzes the reversible isomerization of glucose-6-phosphate to fructose-6-phosphate. This Symbiobacterium thermophilum (strain DSM 24528 / JCM 14929 / IAM 14863 / T) protein is Glucose-6-phosphate isomerase.